The sequence spans 184 residues: Guanylate kinase (184 aa).

A Guanylate kinase-like domain is found at 5-183; it reads KKLIIITGPS…TVKEVLKIIK (179 aa). Residue 12-19 coordinates ATP; that stretch reads GPSGVGKG.

The protein belongs to the guanylate kinase family.

Its subcellular location is the cytoplasm. The catalysed reaction is GMP + ATP = GDP + ADP. In terms of biological role, essential for recycling GMP and indirectly, cGMP. The chain is Guanylate kinase from Prochlorococcus marinus subsp. pastoris (strain CCMP1986 / NIES-2087 / MED4).